The primary structure comprises 314 residues: Olfactory receptor 5D14 (314 aa).

Topologically, residues 1–27 (MMMVLRNLSMEPTFALLGFTDYPKLQI) are extracellular. Asparagine 7 carries an N-linked (GlcNAc...) asparagine glycan. A helical membrane pass occupies residues 28 to 48 (PLFLVFLLMYVITVVGNLGMI). At 49–56 (IIIKINPK) the chain is on the cytoplasmic side. Residues 57–77 (FHTPMYFFLSHLSFVDFCYSS) traverse the membrane as a helical segment. Residues 78-101 (IVTPKLLENLVMADKSIFYFSCMM) lie on the Extracellular side of the membrane. A helical membrane pass occupies residues 102-122 (QYFLSCTAVVTESFLLAVMAY). The Cytoplasmic portion of the chain corresponds to 123-141 (DRFVAICNPLLYTVAMSQR). The helical transmembrane segment at 142–162 (LCALLVAGSYLWGMFGPLVLL) threads the bilayer. Topologically, residues 163–198 (CYALRLNFSGPNVINHFFCEYTALISVSGSDILIPH) are extracellular. N-linked (GlcNAc...) asparagine glycosylation is present at asparagine 169. A helical transmembrane segment spans residues 199-219 (LLLFSFATFNEMCTLLIILTS). Residues 220 to 239 (YVFIFVTVLKIRSVSGRHKA) lie on the Cytoplasmic side of the membrane. Residues 240–260 (FSTWASHLTSITIFHGTILFL) traverse the membrane as a helical segment. Over 261–273 (YCVPNSKNSRQTV) the chain is Extracellular. The chain crosses the membrane as a helical span at residues 274 to 294 (KVASVFYTVVNPMLNPLIYSL). Residues 295 to 314 (RNKDVKDAFWKLIHTQVPFH) lie on the Cytoplasmic side of the membrane.

Belongs to the G-protein coupled receptor 1 family.

It localises to the cell membrane. Odorant receptor. This chain is Olfactory receptor 5D14 (OR5D14), found in Homo sapiens (Human).